The primary structure comprises 264 residues: Short chain dehydrogenase/reductase dmxR18 (264 aa).

NADP(+) is bound by residues Ile-24, Asp-70, Asn-97, and Arg-130. Catalysis depends on proton donor residues Ser-146 and Ser-147. Residues Tyr-161, Lys-165, and Thr-196 each coordinate NADP(+). The active-site Proton acceptor is the Tyr-161. The active-site Lowers pKa of active site Tyr is Lys-165.

It belongs to the short-chain dehydrogenases/reductases (SDR) family.

It carries out the reaction 3,8,9,10-tetrahydroxy-6-methyl-1,4-dihydroanthracen-1-one + NADPH + H(+) = (3R)-3,8,9,10-tetrahydroxy-6-methyl-1,2,3,4-tetrahydroanthracen-1-one + NADP(+). It functions in the pathway secondary metabolite biosynthesis. Short chain dehydrogenase/reductase; part of the gene cluster that mediates the biosynthesis of the dimeric xanthones cryptosporioptides. The pathway begins with the synthesis of atrochrysone thioester by the polyketide synthase dmx-nrPKS. The atrochrysone carboxyl ACP thioesterase dmxR1 then breaks the thioester bond and releases the atrochrysone carboxylic acid from dmx-nrPKS. Atrochrysone carboxylic acid is decarboxylated by the decarboxylase dmxR15, and oxidized by the anthrone oxygenase dmxR16 to yield emodin. Emodin is then reduced to emodin hydroquinone by the oxidoreductase dmxR7. A-ring reduction by the short chain dehydrogenase dmxR18, dehydration by the scytalone dehydratase-like protein dmxR17 and probable spontaneous re-oxidation, results in overall deoxygenation to chrysophanol. Baeyer-Villiger oxidation by the Baeyer-Villiger monooxygenase (BVMO) dmxR6 then yields monodictylactone in equilibrium with monodictyphenone. In the case of the cryptosporioptides biosynthesis, monodictylactone is reduced at C-12 to an alcohol (by the short chain dehydrogenases dmxR12 or dmxR8) and hydroxylated at C-5 by dmxR9, yielding the electron-rich aromatic which could eliminate H(2)O to form the ortho-quinonemethide, followed by tautomerisation to paraquinone and complete the formal reduction to produce the 10-methylgroup. Conjugate addition of C-4a-OH to the resulting paraquinone by the monooxygenase dmxR10 then gives cyclohexadienone, which is then reduced at C-5 by the short chain dehydrogenase dmxR3 to give the dihydroxanthone. The 6,7-epoxide in the cryptosporioptides could be introduced by the cytochrome P450 monooxygenase dmxL3. The highly reducing PKS dmxL2 manufactures butyrate, which is further carboxylated by dmxL1 to form ethylmalonate. It is not yet clear whether the carboxylation occurs while the butyrate is attached to the ACP of dmxL2, but this unusual fungal metabolite could then be esterified to O-5 by the O-acetyltransferase dmxR13. Finally, dimerization performed by dmxR5 gives the observed dimers cryptosporioptides A, B and C as the final products of the pathway. This is Short chain dehydrogenase/reductase dmxR18 from Cryptosporiopsis sp. (strain 8999).